Consider the following 450-residue polypeptide: Putative zinc metalloprotease TP_0600 (450 aa).

Zn(2+) is bound at residue His18. Glu19 is a catalytic residue. Zn(2+) is bound at residue His22. Residues 102 to 124 (IAFAGPLANVLMAVMVLALVSAL) form a helical membrane-spanning segment. Residues 200-278 (TITPDRDAHT…SVVLTVLRSG (79 aa)) enclose the PDZ domain. The next 2 helical transmembrane spans lie at 384–406 (VCVS…LILF) and 421–443 (VLYY…AFWN).

It belongs to the peptidase M50B family. It depends on Zn(2+) as a cofactor.

It localises to the cell inner membrane. The protein is Putative zinc metalloprotease TP_0600 of Treponema pallidum (strain Nichols).